The sequence spans 87 residues: UPF0335 protein RL4065 (87 aa).

It belongs to the UPF0335 family.

This chain is UPF0335 protein RL4065, found in Rhizobium johnstonii (strain DSM 114642 / LMG 32736 / 3841) (Rhizobium leguminosarum bv. viciae).